We begin with the raw amino-acid sequence, 119 residues long: Holo-[acyl-carrier-protein] synthase (119 aa).

Asp8 and Glu58 together coordinate Mg(2+).

This sequence belongs to the P-Pant transferase superfamily. AcpS family. It depends on Mg(2+) as a cofactor.

Its subcellular location is the cytoplasm. It carries out the reaction apo-[ACP] + CoA = holo-[ACP] + adenosine 3',5'-bisphosphate + H(+). Its function is as follows. Transfers the 4'-phosphopantetheine moiety from coenzyme A to a Ser of acyl-carrier-protein. The protein is Holo-[acyl-carrier-protein] synthase of Bacillus cereus (strain B4264).